We begin with the raw amino-acid sequence, 476 residues long: Aspartyl/glutamyl-tRNA(Asn/Gln) amidotransferase subunit B (476 aa).

This sequence belongs to the GatB/GatE family. GatB subfamily. In terms of assembly, heterotrimer of A, B and C subunits.

It carries out the reaction L-glutamyl-tRNA(Gln) + L-glutamine + ATP + H2O = L-glutaminyl-tRNA(Gln) + L-glutamate + ADP + phosphate + H(+). The catalysed reaction is L-aspartyl-tRNA(Asn) + L-glutamine + ATP + H2O = L-asparaginyl-tRNA(Asn) + L-glutamate + ADP + phosphate + 2 H(+). Functionally, allows the formation of correctly charged Asn-tRNA(Asn) or Gln-tRNA(Gln) through the transamidation of misacylated Asp-tRNA(Asn) or Glu-tRNA(Gln) in organisms which lack either or both of asparaginyl-tRNA or glutaminyl-tRNA synthetases. The reaction takes place in the presence of glutamine and ATP through an activated phospho-Asp-tRNA(Asn) or phospho-Glu-tRNA(Gln). The chain is Aspartyl/glutamyl-tRNA(Asn/Gln) amidotransferase subunit B from Clostridium botulinum (strain Okra / Type B1).